A 417-amino-acid polypeptide reads, in one-letter code: Gamma-glutamyl phosphate reductase (417 aa).

This sequence belongs to the gamma-glutamyl phosphate reductase family.

It is found in the cytoplasm. It carries out the reaction L-glutamate 5-semialdehyde + phosphate + NADP(+) = L-glutamyl 5-phosphate + NADPH + H(+). Its pathway is amino-acid biosynthesis; L-proline biosynthesis; L-glutamate 5-semialdehyde from L-glutamate: step 2/2. In terms of biological role, catalyzes the NADPH-dependent reduction of L-glutamate 5-phosphate into L-glutamate 5-semialdehyde and phosphate. The product spontaneously undergoes cyclization to form 1-pyrroline-5-carboxylate. This Haemophilus influenzae (strain PittEE) protein is Gamma-glutamyl phosphate reductase.